Here is a 332-residue protein sequence, read N- to C-terminus: Protoheme IX farnesyltransferase (332 aa).

Transmembrane regions (helical) follow at residues 63-83 (LICTLGGGALAAAAAGALNCL), 109-129 (TVFLGAVSCTFAAAMLLISGV), 132-152 (LAAGLTLLGLCSYVILYTIIL), 160-180 (IVFGGVAGAIPPLVGASAATG), 188-208 (WLFGLVMLWTPAHFWALAILL), 245-265 (ILGVFALPEGGLLYVIMLLPF), and 286-306 (AKGLFRWSILYMFGICLLLLI).

It belongs to the UbiA prenyltransferase family. Protoheme IX farnesyltransferase subfamily.

It localises to the cell inner membrane. The catalysed reaction is heme b + (2E,6E)-farnesyl diphosphate + H2O = Fe(II)-heme o + diphosphate. The protein operates within porphyrin-containing compound metabolism; heme O biosynthesis; heme O from protoheme: step 1/1. In terms of biological role, converts heme B (protoheme IX) to heme O by substitution of the vinyl group on carbon 2 of heme B porphyrin ring with a hydroxyethyl farnesyl side group. This chain is Protoheme IX farnesyltransferase, found in Prochlorococcus marinus (strain MIT 9515).